The chain runs to 128 residues: NADH-quinone oxidoreductase subunit A (128 aa).

3 consecutive transmembrane segments (helical) span residues 5-25 (IPIL…VVIA), 72-92 (LTAM…PWAV), and 100-120 (FALV…AYVW).

Belongs to the complex I subunit 3 family. As to quaternary structure, NDH-1 is composed of 14 different subunits. Subunits NuoA, H, J, K, L, M, N constitute the membrane sector of the complex.

It is found in the cell membrane. The enzyme catalyses a quinone + NADH + 5 H(+)(in) = a quinol + NAD(+) + 4 H(+)(out). Its function is as follows. NDH-1 shuttles electrons from NADH, via FMN and iron-sulfur (Fe-S) centers, to quinones in the respiratory chain. The immediate electron acceptor for the enzyme in this species is believed to be a menaquinone. Couples the redox reaction to proton translocation (for every two electrons transferred, four hydrogen ions are translocated across the cytoplasmic membrane), and thus conserves the redox energy in a proton gradient. The sequence is that of NADH-quinone oxidoreductase subunit A from Mycobacterium bovis (strain ATCC BAA-935 / AF2122/97).